The primary structure comprises 105 residues: MRKFETLLLLSPELSPDAREALLVKLVSIIEKNKGQFTVNHWGMRDLAYPVQKHMRGYYVLLEYTTYPNIIEELERIIRITNGIFKFMTIKLEEHIEEKQLEEVV.

The protein belongs to the bacterial ribosomal protein bS6 family.

Its function is as follows. Binds together with bS18 to 16S ribosomal RNA. The sequence is that of Small ribosomal subunit protein bS6 from Lawsonia intracellularis (strain PHE/MN1-00).